The sequence spans 368 residues: mRNA export factor (368 aa).

The disordered stretch occupies residues 15 to 34 (TSMFGSTTTDNHNPMKDIEV). 7 WD repeats span residues 37–79 (SPDD…QTIP), 84–114 (MHTG…KMWD), 125–157 (QHDA…KFWD), 168–206 (QLPE…EFRR), 215–255 (HRCV…KDNF), 271–301 (QDIY…SFWD), and 310–346 (TSEQ…EFYN). At T229 the chain carries Phosphothreonine.

Belongs to the WD repeat rae1 family. In terms of assembly, interacts with NUMA1 (via N-terminal end of the coiled-coil domain); this interaction promotes spindle formation in mitosis. Interacts with NUP98. Interacts with MYCBP2. Interacts with USP11.

The protein resides in the cytoplasm. The protein localises to the nucleus. It localises to the cytoskeleton. It is found in the spindle pole. In terms of biological role, plays a role in mitotic bipolar spindle formation. Binds mRNA. May function in nucleocytoplasmic transport and in directly or indirectly attaching cytoplasmic mRNPs to the cytoskeleton. This chain is mRNA export factor (Rae1), found in Mus musculus (Mouse).